The chain runs to 51 residues: Large ribosomal subunit protein eL39 (51 aa).

Belongs to the eukaryotic ribosomal protein eL39 family.

In Staphylothermus marinus (strain ATCC 43588 / DSM 3639 / JCM 9404 / F1), this protein is Large ribosomal subunit protein eL39.